We begin with the raw amino-acid sequence, 238 residues long: Probable 2-phosphosulfolactate phosphatase (238 aa).

Belongs to the ComB family. Mg(2+) is required as a cofactor.

It carries out the reaction (2R)-O-phospho-3-sulfolactate + H2O = (2R)-3-sulfolactate + phosphate. This is Probable 2-phosphosulfolactate phosphatase from Clostridium botulinum (strain Alaska E43 / Type E3).